Consider the following 105-residue polypeptide: Serine protease inhibitor Kazal-type 6 (105 aa).

The N-terminal stretch at 1–23 (MKVAGVFLLLSLALLCFFSGEFS) is a signal peptide. Residue Q24 is modified to Pyrrolidone carboxylic acid. One can recognise a Kazal-like domain in the interval 49-105 (RLFQINCGEFRDPKVFCTRESDPLCGSDGQTYGNKCAFCKALEKSSGKINLKHRGKC). 3 cysteine pairs are disulfide-bonded: C55–C87, C65–C84, and C73–C105.

It is found in the secreted. Its function is as follows. Serine protease inhibitor selective for kallikreins. Efficiently inhibits KLK4, KLK5, KLK6, KLK7, KLK12, KLK13 and KLK14. Doesn't inhibit KLK8. This chain is Serine protease inhibitor Kazal-type 6 (Spink6), found in Rattus norvegicus (Rat).